We begin with the raw amino-acid sequence, 61 residues long: uncharacterized protein (61 aa).

This is an uncharacterized protein from Dictyostelium discoideum (Social amoeba).